A 370-amino-acid polypeptide reads, in one-letter code: Probable neutral protease 2 homolog ARB_03949 (370 aa).

The first 19 residues, 1–19, serve as a signal peptide directing secretion; that stretch reads MQLVAALAALGALVAPAVA. The propeptide occupies 20-188; it reads YPHAPMNETL…SIHSRALQKR (169 aa). Intrachain disulfides connect Cys196/Cys267 and Cys274/Cys292. His316 is a binding site for Zn(2+). The active site involves Glu317. Residues His320 and Asp331 each coordinate Zn(2+).

This sequence belongs to the peptidase M35 family. It depends on Zn(2+) as a cofactor.

The protein localises to the secreted. It catalyses the reaction Preferential cleavage of bonds with hydrophobic residues in P1'. Also 3-Asn-|-Gln-4 and 8-Gly-|-Ser-9 bonds in insulin B chain.. In terms of biological role, probable secreted metalloprotease that shows high activities on basic nuclear substrates such as histone and protamine. May be involved in virulence. This Arthroderma benhamiae (strain ATCC MYA-4681 / CBS 112371) (Trichophyton mentagrophytes) protein is Probable neutral protease 2 homolog ARB_03949.